The primary structure comprises 352 residues: Quinolinate synthase (352 aa).

Residues His-48 and Ser-69 each coordinate iminosuccinate. A [4Fe-4S] cluster-binding site is contributed by Cys-114. Iminosuccinate-binding positions include 140–142 (YAN) and Ser-157. [4Fe-4S] cluster is bound at residue Cys-201. Residues 227-229 (HPE) and Thr-244 contribute to the iminosuccinate site. Cys-298 is a binding site for [4Fe-4S] cluster.

This sequence belongs to the quinolinate synthase family. Type 1 subfamily. Requires [4Fe-4S] cluster as cofactor.

The protein localises to the cytoplasm. The enzyme catalyses iminosuccinate + dihydroxyacetone phosphate = quinolinate + phosphate + 2 H2O + H(+). Its pathway is cofactor biosynthesis; NAD(+) biosynthesis; quinolinate from iminoaspartate: step 1/1. Functionally, catalyzes the condensation of iminoaspartate with dihydroxyacetone phosphate to form quinolinate. This Pseudomonas syringae pv. tomato (strain ATCC BAA-871 / DC3000) protein is Quinolinate synthase.